The sequence spans 607 residues: DNA polymerase (607 aa).

The 213-residue stretch at 1 to 213 folds into the 3'-5' exonuclease domain; it reads MIELRHEVQG…CSALAPLVPD (213 aa). The interval 214-607 is polymerase; that stretch reads VSRPLVPYEH…SWGSLYGADY (394 aa).

Belongs to the DNA polymerase type-A family.

The enzyme catalyses DNA(n) + a 2'-deoxyribonucleoside 5'-triphosphate = DNA(n+1) + diphosphate. In terms of biological role, replicates viral genomic DNA. This polymerase possesses two enzymatic activities: DNA synthesis (polymerase) and an exonucleolytic activity that degrades single-stranded DNA in the 3'-5' direction. This is DNA polymerase (44) from Mycobacterium phage D29 (Mycobacteriophage D29).